The primary structure comprises 409 residues: Sperm equatorial segment protein 1 (409 aa).

An N-terminal signal peptide occupies residues 1 to 18 (MKPVVLVALLWLWPSSFL). N-linked (GlcNAc...) asparagine glycosylation occurs at Asn-132. The tract at residues 141 to 223 (EPYIEKEPEP…TTNTQGTPNT (83 aa)) is disordered. Acidic residues predominate over residues 167–177 (PEPEPESESAP). Polar residues predominate over residues 198–208 (NKVRTGTSRMS). Residues 209-223 (TVITQTTNTQGTPNT) show a composition bias toward low complexity.

Belongs to the SPESP1 family. In terms of processing, glycosylated. In testis there are two predominant forms of 77- and 67-kDa and a form of 47-kDa, whereas in epididymal sperm from caput, corpus, and cauda there are two forms of 47- and 43-kDa. Testis forms contain complex carbohydrate residues. Epididymal sperm forms are N-glycosylated. Then undergoes significant glycosylation in the testis and that the majority of these glycoconjugates are removed by the time sperm reach the caput epididymis.

The protein resides in the cytoplasmic vesicle. It is found in the secretory vesicle. Its subcellular location is the acrosome. Its function is as follows. Involved in fertilization ability of sperm. The polypeptide is Sperm equatorial segment protein 1 (Rattus norvegicus (Rat)).